A 355-amino-acid chain; its full sequence is 3-isopropylmalate dehydrogenase (355 aa).

The substrate site is built by Arg90, Arg100, Arg128, and Asp222. The Mg(2+) site is built by Asp222, Asp246, and Asp250. 280-292 (GSAPDIAGKGIAN) contacts NAD(+).

This sequence belongs to the isocitrate and isopropylmalate dehydrogenases family. LeuB type 1 subfamily. In terms of assembly, homodimer. Requires Mg(2+) as cofactor. The cofactor is Mn(2+).

It is found in the cytoplasm. The catalysed reaction is (2R,3S)-3-isopropylmalate + NAD(+) = 4-methyl-2-oxopentanoate + CO2 + NADH. It participates in amino-acid biosynthesis; L-leucine biosynthesis; L-leucine from 3-methyl-2-oxobutanoate: step 3/4. In terms of biological role, catalyzes the oxidation of 3-carboxy-2-hydroxy-4-methylpentanoate (3-isopropylmalate) to 3-carboxy-4-methyl-2-oxopentanoate. The product decarboxylates to 4-methyl-2 oxopentanoate. This is 3-isopropylmalate dehydrogenase from Burkholderia mallei (strain ATCC 23344).